The primary structure comprises 338 residues: RNA 3'-terminal phosphate cyclase (338 aa).

ATP is bound by residues glutamine 103 and 283–287; that span reads YLADQ. The active-site Tele-AMP-histidine intermediate is the histidine 308.

The protein belongs to the RNA 3'-terminal cyclase family. Type 1 subfamily.

It localises to the cytoplasm. It carries out the reaction a 3'-end 3'-phospho-ribonucleotide-RNA + ATP = a 3'-end 2',3'-cyclophospho-ribonucleotide-RNA + AMP + diphosphate. Functionally, catalyzes the conversion of 3'-phosphate to a 2',3'-cyclic phosphodiester at the end of RNA. The mechanism of action of the enzyme occurs in 3 steps: (A) adenylation of the enzyme by ATP; (B) transfer of adenylate to an RNA-N3'P to produce RNA-N3'PP5'A; (C) and attack of the adjacent 2'-hydroxyl on the 3'-phosphorus in the diester linkage to produce the cyclic end product. The biological role of this enzyme is unknown but it is likely to function in some aspects of cellular RNA processing. This is RNA 3'-terminal phosphate cyclase from Shigella boydii serotype 4 (strain Sb227).